We begin with the raw amino-acid sequence, 98 residues long: NADH-ubiquinone oxidoreductase chain 4L (98 aa).

3 consecutive transmembrane segments (helical) span residues 1–21, 29–49, and 61–81; these read MPST…GLLL, SLLC…LMAL, and IVLM…LVMV.

It belongs to the complex I subunit 4L family. As to quaternary structure, core subunit of respiratory chain NADH dehydrogenase (Complex I) which is composed of 45 different subunits.

It is found in the mitochondrion inner membrane. The catalysed reaction is a ubiquinone + NADH + 5 H(+)(in) = a ubiquinol + NAD(+) + 4 H(+)(out). Core subunit of the mitochondrial membrane respiratory chain NADH dehydrogenase (Complex I) which catalyzes electron transfer from NADH through the respiratory chain, using ubiquinone as an electron acceptor. Part of the enzyme membrane arm which is embedded in the lipid bilayer and involved in proton translocation. This chain is NADH-ubiquinone oxidoreductase chain 4L (MT-ND4L), found in Choloepus didactylus (Southern two-toed sloth).